The chain runs to 274 residues: Large ribosomal subunit protein uL2 (274 aa).

The disordered stretch occupies residues 222 to 274 (GVAMNPVDHPHGGGEGRGKGHHPQSPWGQLAKGYKTRRGKKASDKLIVRRRNG). Residues 229-239 (DHPHGGGEGRG) are compositionally biased toward basic and acidic residues.

This sequence belongs to the universal ribosomal protein uL2 family. In terms of assembly, part of the 50S ribosomal subunit. Forms a bridge to the 30S subunit in the 70S ribosome.

Its function is as follows. One of the primary rRNA binding proteins. Required for association of the 30S and 50S subunits to form the 70S ribosome, for tRNA binding and peptide bond formation. It has been suggested to have peptidyltransferase activity; this is somewhat controversial. Makes several contacts with the 16S rRNA in the 70S ribosome. The chain is Large ribosomal subunit protein uL2 from Thermosipho melanesiensis (strain DSM 12029 / CIP 104789 / BI429).